The following is a 290-amino-acid chain: ATP synthase gamma chain (290 aa).

Belongs to the ATPase gamma chain family. As to quaternary structure, F-type ATPases have 2 components, CF(1) - the catalytic core - and CF(0) - the membrane proton channel. CF(1) has five subunits: alpha(3), beta(3), gamma(1), delta(1), epsilon(1). CF(0) has three main subunits: a, b and c.

It localises to the cell inner membrane. Functionally, produces ATP from ADP in the presence of a proton gradient across the membrane. The gamma chain is believed to be important in regulating ATPase activity and the flow of protons through the CF(0) complex. The chain is ATP synthase gamma chain from Amoebophilus asiaticus (strain 5a2).